The primary structure comprises 145 residues: Large ribosomal subunit protein bL9 (145 aa).

It belongs to the bacterial ribosomal protein bL9 family.

Its function is as follows. Binds to the 23S rRNA. The sequence is that of Large ribosomal subunit protein bL9 from Mesomycoplasma hyopneumoniae (strain 7448) (Mycoplasma hyopneumoniae).